We begin with the raw amino-acid sequence, 315 residues long: Methionyl-tRNA formyltransferase (315 aa).

112 to 115 (SLLP) is a binding site for (6S)-5,6,7,8-tetrahydrofolate.

This sequence belongs to the Fmt family.

The enzyme catalyses L-methionyl-tRNA(fMet) + (6R)-10-formyltetrahydrofolate = N-formyl-L-methionyl-tRNA(fMet) + (6S)-5,6,7,8-tetrahydrofolate + H(+). Its function is as follows. Attaches a formyl group to the free amino group of methionyl-tRNA(fMet). The formyl group appears to play a dual role in the initiator identity of N-formylmethionyl-tRNA by promoting its recognition by IF2 and preventing the misappropriation of this tRNA by the elongation apparatus. This Rhizobium rhizogenes (strain K84 / ATCC BAA-868) (Agrobacterium radiobacter) protein is Methionyl-tRNA formyltransferase.